A 781-amino-acid polypeptide reads, in one-letter code: Phenylalanine--tRNA ligase beta subunit (781 aa).

The 109-residue stretch at 39–147 (APPFNDVVVA…DDAPVGEDLR (109 aa)) folds into the tRNA-binding domain. A B5 domain is found at 398–473 (PRREPIELRL…RLFGYDRIPA (76 aa)). 4 residues coordinate Mg(2+): Asp451, Asp457, Glu460, and Glu461. In terms of domain architecture, FDX-ACB spans 687–780 (SRFPQVRRDL…AARRCSATLR (94 aa)).

Belongs to the phenylalanyl-tRNA synthetase beta subunit family. Type 1 subfamily. In terms of assembly, tetramer of two alpha and two beta subunits. Mg(2+) serves as cofactor.

Its subcellular location is the cytoplasm. It carries out the reaction tRNA(Phe) + L-phenylalanine + ATP = L-phenylalanyl-tRNA(Phe) + AMP + diphosphate + H(+). This is Phenylalanine--tRNA ligase beta subunit from Thiobacillus denitrificans (strain ATCC 25259 / T1).